Reading from the N-terminus, the 630-residue chain is Tyrosinase (630 aa).

Residues histidine 69, histidine 92, histidine 101, histidine 317, histidine 321, and histidine 360 each contribute to the Cu cation site. Positions 90–92 (CVH) form a cross-link, 2'-(S-cysteinyl)-histidine (Cys-His).

It belongs to the tyrosinase family. Cu(2+) serves as cofactor.

It carries out the reaction 2 L-dopa + O2 = 2 L-dopaquinone + 2 H2O. The enzyme catalyses L-tyrosine + O2 = L-dopaquinone + H2O. In terms of biological role, this is a copper-containing oxidase that functions in the formation of pigments such as melanins and other polyphenolic compounds. The polypeptide is Tyrosinase (tyr1) (Aspergillus fumigatus (strain ATCC MYA-4609 / CBS 101355 / FGSC A1100 / Af293) (Neosartorya fumigata)).